Consider the following 429-residue polypeptide: Adenylosuccinate synthetase (429 aa).

Residues 12–18 (GDEGKGK) and 40–42 (GHT) contribute to the GTP site. Asp13 acts as the Proton acceptor in catalysis. The Mg(2+) site is built by Asp13 and Gly40. Residues 13-16 (DEGK), 38-41 (NAGH), Thr128, Arg142, Gln223, Thr238, and Arg302 each bind IMP. The active-site Proton donor is the His41. 298–304 (TTTGRPR) provides a ligand contact to substrate. GTP-binding positions include Arg304, 330 to 332 (SID), and 412 to 414 (SVG).

This sequence belongs to the adenylosuccinate synthetase family. As to quaternary structure, homodimer. Mg(2+) serves as cofactor.

It is found in the cytoplasm. It carries out the reaction IMP + L-aspartate + GTP = N(6)-(1,2-dicarboxyethyl)-AMP + GDP + phosphate + 2 H(+). The protein operates within purine metabolism; AMP biosynthesis via de novo pathway; AMP from IMP: step 1/2. Its function is as follows. Plays an important role in the de novo pathway of purine nucleotide biosynthesis. Catalyzes the first committed step in the biosynthesis of AMP from IMP. The polypeptide is Adenylosuccinate synthetase (Bacillus cytotoxicus (strain DSM 22905 / CIP 110041 / 391-98 / NVH 391-98)).